Here is a 445-residue protein sequence, read N- to C-terminus: 6-phosphogluconate dehydrogenase, decarboxylating (445 aa).

NADP(+)-binding positions include 1 to 4 (AVMG), 22 to 24 (NRS), 63 to 65 (VKA), and asparagine 91. Substrate contacts are provided by residues asparagine 91 and 117–119 (SGG). Lysine 172 functions as the Proton acceptor in the catalytic mechanism. 175–176 (HN) contacts substrate. Glutamate 179 functions as the Proton donor in the catalytic mechanism. Substrate-binding residues include tyrosine 180, lysine 249, arginine 276, arginine 434, and histidine 440.

It belongs to the 6-phosphogluconate dehydrogenase family. Homodimer.

The enzyme catalyses 6-phospho-D-gluconate + NADP(+) = D-ribulose 5-phosphate + CO2 + NADPH. It functions in the pathway carbohydrate degradation; pentose phosphate pathway; D-ribulose 5-phosphate from D-glucose 6-phosphate (oxidative stage): step 3/3. In terms of biological role, catalyzes the oxidative decarboxylation of 6-phosphogluconate to ribulose 5-phosphate and CO(2), with concomitant reduction of NADP to NADPH. This chain is 6-phosphogluconate dehydrogenase, decarboxylating (gnd), found in Citrobacter amalonaticus.